The following is a 700-amino-acid chain: Elongation factor G (700 aa).

One can recognise a tr-type G domain in the interval 10-285 (DRTRNIGIMA…AVIDYLPSPL (276 aa)). GTP is bound by residues 19 to 26 (AHIDAGKT), 83 to 87 (DTPGH), and 137 to 140 (NKMD).

The protein belongs to the TRAFAC class translation factor GTPase superfamily. Classic translation factor GTPase family. EF-G/EF-2 subfamily.

The protein localises to the cytoplasm. Catalyzes the GTP-dependent ribosomal translocation step during translation elongation. During this step, the ribosome changes from the pre-translocational (PRE) to the post-translocational (POST) state as the newly formed A-site-bound peptidyl-tRNA and P-site-bound deacylated tRNA move to the P and E sites, respectively. Catalyzes the coordinated movement of the two tRNA molecules, the mRNA and conformational changes in the ribosome. This Lacticaseibacillus casei (strain BL23) (Lactobacillus casei) protein is Elongation factor G.